A 208-amino-acid chain; its full sequence is Large ribosomal subunit protein uL3 (208 aa).

Position 149 is an N5-methylglutamine (glutamine 149).

It belongs to the universal ribosomal protein uL3 family. Part of the 50S ribosomal subunit. Forms a cluster with proteins L14 and L19. Methylated by PrmB.

One of the primary rRNA binding proteins, it binds directly near the 3'-end of the 23S rRNA, where it nucleates assembly of the 50S subunit. This Actinobacillus succinogenes (strain ATCC 55618 / DSM 22257 / CCUG 43843 / 130Z) protein is Large ribosomal subunit protein uL3.